A 394-amino-acid polypeptide reads, in one-letter code: Phosphopentomutase (394 aa).

Residues Asp14, Asp287, His292, Asp328, His329, and His340 each coordinate Mn(2+).

It belongs to the phosphopentomutase family. Requires Mn(2+) as cofactor.

The protein localises to the cytoplasm. The catalysed reaction is 2-deoxy-alpha-D-ribose 1-phosphate = 2-deoxy-D-ribose 5-phosphate. It catalyses the reaction alpha-D-ribose 1-phosphate = D-ribose 5-phosphate. Its pathway is carbohydrate degradation; 2-deoxy-D-ribose 1-phosphate degradation; D-glyceraldehyde 3-phosphate and acetaldehyde from 2-deoxy-alpha-D-ribose 1-phosphate: step 1/2. Functionally, isomerase that catalyzes the conversion of deoxy-ribose 1-phosphate (dRib-1-P) and ribose 1-phosphate (Rib-1-P) to deoxy-ribose 5-phosphate (dRib-5-P) and ribose 5-phosphate (Rib-5-P), respectively. This chain is Phosphopentomutase, found in Shouchella clausii (strain KSM-K16) (Alkalihalobacillus clausii).